The primary structure comprises 56 residues: Large ribosomal subunit protein bL33 (56 aa).

It belongs to the bacterial ribosomal protein bL33 family.

This chain is Large ribosomal subunit protein bL33, found in Acidovorax sp. (strain JS42).